Consider the following 400-residue polypeptide: NADH-quinone oxidoreductase subunit D (400 aa).

Belongs to the complex I 49 kDa subunit family. NDH-1 is composed of 14 different subunits. Subunits NuoB, C, D, E, F, and G constitute the peripheral sector of the complex.

The protein resides in the cell inner membrane. It catalyses the reaction a quinone + NADH + 5 H(+)(in) = a quinol + NAD(+) + 4 H(+)(out). NDH-1 shuttles electrons from NADH, via FMN and iron-sulfur (Fe-S) centers, to quinones in the respiratory chain. The immediate electron acceptor for the enzyme in this species is believed to be ubiquinone. Couples the redox reaction to proton translocation (for every two electrons transferred, four hydrogen ions are translocated across the cytoplasmic membrane), and thus conserves the redox energy in a proton gradient. The protein is NADH-quinone oxidoreductase subunit D of Granulibacter bethesdensis (strain ATCC BAA-1260 / CGDNIH1).